The following is a 226-amino-acid chain: Transmembrane 4 L6 family member 20 (226 aa).

The Lumenal segment spans residues 1-14; it reads MTCCEGWTSCNGFS. The helical transmembrane segment at 15-35 threads the bilayer; sequence LLILILLGVVINCIPLGISLV. Topologically, residues 36–49 are cytoplasmic; that stretch reads EADSTSQNPISCYE. Residues 50–70 form a helical membrane-spanning segment; sequence WWFPGIIGAGLMAIPATTMSL. The Lumenal portion of the chain corresponds to 71–83; it reads AARKRACCNNKTG. Residues 84-104 form a helical membrane-spanning segment; it reads MFLSSLFSVITVVGAVYCMLV. The Cytoplasmic portion of the chain corresponds to 105–191; the sequence is SLQALLEGPL…RIFHFSVFMS (87 aa). Residues 192 to 212 traverse the membrane as a helical segment; that stretch reads LLLVGILELLFGLSQILIGFL. The Lumenal segment spans residues 213 to 226; the sequence is GCLCGVSQRRSQIV.

This sequence belongs to the L6 tetraspanin family. Glycosylated at Asn-132, Asn-148 and Asn-163 in presence of ceramide which inverts the orientation of TM4SF20 in membranes exposing these residues to the endoplasmic reticulum lumen. In terms of processing, cleaved by signal peptidase at Ser-14 but the peptide does not act as a signal peptide. Cleavage is inhibited by ceramide which inverts the orientation of TM4SF20 in membranes exposing the N-terminus to the cytosol and not to the endoplasmic reticulum lumen.

It localises to the membrane. The protein resides in the endoplasmic reticulum membrane. Polytopic transmembrane protein. Inhibits regulated intramembrane proteolysis (RIP) of CREB3L1, inhibiting its activation and the induction of collagen synthesis. In response to ceramide, which alters TM4SF20 membrane topology, stimulates RIP activation of CREB3L1. Ceramide reverses the direction through which transmembrane helices are translocated into the endoplasmic reticulum membrane during translation of TM4SF20, this mechanism is called 'regulated alternative translocation' (RAT) and regulates the function of the transmembrane protein. In Mus musculus (Mouse), this protein is Transmembrane 4 L6 family member 20 (Tm4sf20).